Here is a 435-residue protein sequence, read N- to C-terminus: MAAAYSTVGAVNRAPLSLNGSGARASLVPSTAFFGSSLKKSAAKFPKASSGNFKIVAQEISEDQQTDKDKWKGLAYDISDDQQDITRGKGMVDTLFQAPMQSGTHYAVMSSYDYISQGLRQYNLDNNMDGFYIAPAFMDKLVVHITKNFLSLPNIKIPLILGIWGGKGQGKSFQCELVFAKMGINPIMMSAGELESGNAGEPAKLIRQRYREAADIIKKGKMCCLFINDLDAGAGRMGGTTQYTVNNQMVNATLMNIADNPTNVQLPGMYNKEENPRVPIIVTGNDFSTLYAPLIRDGRMEKFYWAPTREDRIGVCKGIFRTDNVPEEDIVKVVDQFPGQSIDFFGALRARVYDDEVRKWVSEVGVDTIGKKLVNSKEGPPTFEQPKMTIDKLLQYGNMLVEEQENVKRVQLADKYMSEAALGDANQDAIKRGTF.

The N-terminal 56 residues, 1–56, are a transit peptide targeting the chloroplast; the sequence is MAAAYSTVGAVNRAPLSLNGSGARASLVPSTAFFGSSLKKSAAKFPKASSGNFKIV. Position 165 to 172 (165 to 172) interacts with ATP; the sequence is GGKGQGKS.

The protein belongs to the RuBisCO activase family.

The protein resides in the plastid. It localises to the chloroplast stroma. In terms of biological role, activation of RuBisCO (ribulose-1,5-bisphosphate carboxylase/oxygenase; EC 4.1.1.39) involves the ATP-dependent carboxylation of the epsilon-amino group of lysine leading to a carbamate structure. This chain is Ribulose bisphosphate carboxylase/oxygenase activase 2, chloroplastic (RCA2), found in Larrea tridentata (Creosote bush).